A 240-amino-acid chain; its full sequence is Uridylate kinase (240 aa).

13 to 16 (KLSG) is an ATP binding site. Positions 21–26 (GDKGFG) are involved in allosteric activation by GTP. Residue Gly-55 coordinates UMP. ATP-binding residues include Gly-56 and Arg-60. UMP contacts are provided by residues Asp-75 and 136 to 143 (IGNPYFST). 3 residues coordinate ATP: Asn-164, Tyr-170, and Asp-173.

Belongs to the UMP kinase family. Homohexamer.

Its subcellular location is the cytoplasm. It catalyses the reaction UMP + ATP = UDP + ADP. It participates in pyrimidine metabolism; CTP biosynthesis via de novo pathway; UDP from UMP (UMPK route): step 1/1. With respect to regulation, allosterically activated by GTP. Inhibited by UTP. In terms of biological role, catalyzes the reversible phosphorylation of UMP to UDP. The sequence is that of Uridylate kinase from Staphylococcus epidermidis (strain ATCC 35984 / DSM 28319 / BCRC 17069 / CCUG 31568 / BM 3577 / RP62A).